We begin with the raw amino-acid sequence, 312 residues long: Cytochrome c biogenesis protein CcsA (312 aa).

8 consecutive transmembrane segments (helical) span residues 12–32 (NLVFGILLFAMTIYWISLSFF), 47–67 (IVANILLFFILGSRWIVAGYF), 72–92 (LYESLLFLTWTLLTIYLYVEF), 98–118 (LVGAILIPVALLINGFANLTL), 144–164 (MMLSYGTLIMGSLLCILFLVI), 220–240 (IIGLGFPFLTIGIIAGGVWAN), 254–271 (TWALITWIVFATYLHSRI), and 281–301 (AILGGLGFFVIWICYLGVNFL).

Belongs to the CcmF/CycK/Ccl1/NrfE/CcsA family. May interact with Ccs1.

The protein resides in the plastid. Its subcellular location is the chloroplast thylakoid membrane. Required during biogenesis of c-type cytochromes (cytochrome c6 and cytochrome f) at the step of heme attachment. The sequence is that of Cytochrome c biogenesis protein CcsA from Trieres chinensis (Marine centric diatom).